Consider the following 429-residue polypeptide: 3-isopropylmalate dehydratase large subunit (429 aa).

[4Fe-4S] cluster contacts are provided by Cys-303, Cys-363, and Cys-366.

This sequence belongs to the aconitase/IPM isomerase family. LeuC type 2 subfamily. In terms of assembly, heterodimer of LeuC and LeuD. [4Fe-4S] cluster is required as a cofactor.

It catalyses the reaction (2R,3S)-3-isopropylmalate = (2S)-2-isopropylmalate. The protein operates within amino-acid biosynthesis; L-leucine biosynthesis; L-leucine from 3-methyl-2-oxobutanoate: step 2/4. Functionally, catalyzes the isomerization between 2-isopropylmalate and 3-isopropylmalate, via the formation of 2-isopropylmaleate. The chain is 3-isopropylmalate dehydratase large subunit from Caldicellulosiruptor saccharolyticus (strain ATCC 43494 / DSM 8903 / Tp8T 6331).